Here is a 214-residue protein sequence, read N- to C-terminus: Adenylate kinase (214 aa).

Residue 10–15 (GAGKGT) coordinates ATP. An NMP region spans residues 30-59 (STGDMLRAAIKAGTELGLEAKRVMDEGKLV). Residues Thr31, Arg36, 57–59 (KLV), 85–88 (GFPR), and Gln92 contribute to the AMP site. Residues 122 to 159 (GRRVHPASGRVYHVVYNPPKVEGKDNETGDDLIVRDDD) form an LID region. ATP is bound by residues Arg123 and 132-133 (VY). AMP contacts are provided by Arg156 and Arg167. Arg200 provides a ligand contact to ATP.

Belongs to the adenylate kinase family. As to quaternary structure, monomer.

Its subcellular location is the cytoplasm. It catalyses the reaction AMP + ATP = 2 ADP. It functions in the pathway purine metabolism; AMP biosynthesis via salvage pathway; AMP from ADP: step 1/1. Catalyzes the reversible transfer of the terminal phosphate group between ATP and AMP. Plays an important role in cellular energy homeostasis and in adenine nucleotide metabolism. This chain is Adenylate kinase, found in Alteromonas mediterranea (strain DSM 17117 / CIP 110805 / LMG 28347 / Deep ecotype).